Here is a 146-residue protein sequence, read N- to C-terminus: Large ribosomal subunit protein uL13 (146 aa).

Residues 125 to 146 (YAGPKHPHAAQQPKVYEPRPRG) are disordered.

This sequence belongs to the universal ribosomal protein uL13 family. Part of the 50S ribosomal subunit.

In terms of biological role, this protein is one of the early assembly proteins of the 50S ribosomal subunit, although it is not seen to bind rRNA by itself. It is important during the early stages of 50S assembly. In Roseiflexus sp. (strain RS-1), this protein is Large ribosomal subunit protein uL13.